The following is a 101-amino-acid chain: Small ribosomal subunit protein uS10 (101 aa).

It belongs to the universal ribosomal protein uS10 family. As to quaternary structure, part of the 30S ribosomal subunit.

In terms of biological role, involved in the binding of tRNA to the ribosomes. This chain is Small ribosomal subunit protein uS10, found in Anaeromyxobacter dehalogenans (strain 2CP-C).